We begin with the raw amino-acid sequence, 217 residues long: Probable nicotinate-nucleotide adenylyltransferase (217 aa).

This sequence belongs to the NadD family.

It carries out the reaction nicotinate beta-D-ribonucleotide + ATP + H(+) = deamido-NAD(+) + diphosphate. Its pathway is cofactor biosynthesis; NAD(+) biosynthesis; deamido-NAD(+) from nicotinate D-ribonucleotide: step 1/1. Functionally, catalyzes the reversible adenylation of nicotinate mononucleotide (NaMN) to nicotinic acid adenine dinucleotide (NaAD). The sequence is that of Probable nicotinate-nucleotide adenylyltransferase from Dechloromonas aromatica (strain RCB).